The chain runs to 507 residues: Maturase K (507 aa).

Belongs to the intron maturase 2 family. MatK subfamily.

The protein resides in the plastid. The protein localises to the chloroplast. In terms of biological role, usually encoded in the trnK tRNA gene intron. Probably assists in splicing its own and other chloroplast group II introns. The chain is Maturase K from Magnolia champaca (Yellow jade orchid tree).